The primary structure comprises 372 residues: Beta sliding clamp (372 aa).

Belongs to the beta sliding clamp family. Forms a ring-shaped head-to-tail homodimer around DNA which binds and tethers DNA polymerases and other proteins to the DNA. The DNA replisome complex has a single clamp-loading complex (3 tau and 1 each of delta, delta', psi and chi subunits) which binds 3 Pol III cores (1 core on the leading strand and 2 on the lagging strand) each with a beta sliding clamp dimer. Additional proteins in the replisome are other copies of gamma, psi and chi, Ssb, DNA helicase and RNA primase.

It localises to the cytoplasm. Functionally, confers DNA tethering and processivity to DNA polymerases and other proteins. Acts as a clamp, forming a ring around DNA (a reaction catalyzed by the clamp-loading complex) which diffuses in an ATP-independent manner freely and bidirectionally along dsDNA. Initially characterized for its ability to contact the catalytic subunit of DNA polymerase III (Pol III), a complex, multichain enzyme responsible for most of the replicative synthesis in bacteria; Pol III exhibits 3'-5' exonuclease proofreading activity. The beta chain is required for initiation of replication as well as for processivity of DNA replication. The polypeptide is Beta sliding clamp (dnaN) (Caulobacter vibrioides (strain ATCC 19089 / CIP 103742 / CB 15) (Caulobacter crescentus)).